The following is an 891-amino-acid chain: MQPEEPCAPSAPGGPDVPERGQRSRDPGPRLSGQLLPELYSFVARVLFYLAPVYLAGYLGLSVTWLLLGALLWMWWRRNRRGKLGRLEAAFEFLEHEREFISRELRGQHLPAWIHFPDVERVEWANKIIIQIWPYLSMIMENKIREKLEPKIREKSIHLRTFTFTKLYFGQKCPKVNGVKVHTDKRNRRKVTLDLQICYIGDCEISVELQKIRGGVSGVQLQGTLRVILEPLLVDKPFIGAVTVFFLQKPHLQINWTGLTNLLDMPGINELSDSLLEDLIAAHLVLPNRVTVPVKKGLDVTNLRVPLPCGVIRVHLLEAKKLAQKDNFLGLGGKSDPYAKVSIGLQHCRSRTIYKNLNPTWNEVFEFMVYEVPGQDLEVDLYDEDTDKDDFLGSLQICLGDVMKNRVVDEWFALNDTTSGRLHLRLEWLSLLTDQEALTENDSGLSTAILVVFLENACNLPRNPFDYLNGEYRAKKLSRFVKNKASRDPSSYVKLTVGKKTFTSKTCPHSKDPVWSQVFSFFVHSVAAEQLCLKVLDDELECALGVLEFPLCRILPCADLTLEQCFQLDHSGLDSLISMRLVLRFLRVEGRELGSPYTGPDALKKGPLFIKKVATNQGCKAPPLNEGLADVTSTSNPASYIKGASKSIDNISAATTDPEPMPEPQGPGPEPKGKDSARGLCESPGKKKNPATTFLTVPGLHSPGPIKSPRPMSRPAFPFAWPLTRVAPSMSSLNSLASSCFDLTDVSLNTEAGDSRQGRLGEIQLTVRYVCLRHCLRVLVNGCRNLTPCTSSGADPYVRIYLLPERRWASRKKTSVKQKTLEPLFDETFEFFVPMGEVQKRSLDVAVKNSRPLGSHRRKELGKVLIDLSKQDLIKGFSQWYELTADGQPRS.

The segment at M1–R30 is disordered. Residues M1–S32 lie on the Cytoplasmic side of the membrane. Residues V17–G28 show a composition bias toward basic and acidic residues. Residues G33–V53 traverse the membrane as a helical segment. A topological domain (lumenal) is located at residue Y54. The chain crosses the membrane as a helical span at residues L55–W75. Topologically, residues W76–S891 are cytoplasmic. Residues D118–K295 form the SMP-LTD domain. C2 domains are found at residues V292–F412 and S430–H570. Positions 325, 326, 336, 383, 384, 385, 387, 389, and 390 each coordinate Ca(2+). Residues S652–P711 are disordered. Over residues E659–E670 the composition is skewed to pro residues. In terms of domain architecture, C2 3 spans R759 to Y881. Residues R806 to K813 are required for phosphatidylinositol 4,5-bisphosphate-dependent location at the cell membrane.

This sequence belongs to the extended synaptotagmin family.

It is found in the cell membrane. The protein resides in the endoplasmic reticulum membrane. Its function is as follows. Tethers the endoplasmic reticulum to the cell membrane and promotes the formation of appositions between the endoplasmic reticulum and the cell membrane. Binds glycerophospholipids in a barrel-like domain and may play a role in cellular lipid transport. The polypeptide is Extended synaptotagmin-3 (Esyt3) (Mus musculus (Mouse)).